Consider the following 434-residue polypeptide: UDP-glucuronate 4-epimerase 2 (434 aa).

2 consecutive transmembrane segments (helical) span residues 32 to 52 (SVAK…IFFY) and 91 to 111 (GVSV…SAAL). NAD(+) is bound at residue 93 to 124 (SVLVTGAAGFVGTHVSAALKRRGDGVLGLDNF). Tyr-243 serves as the catalytic Proton acceptor.

Belongs to the NAD(P)-dependent epimerase/dehydratase family. Homodimer. In terms of tissue distribution, in roots, leaves, siliques, flowers, pollen and stems.

It localises to the golgi apparatus. The protein localises to the golgi stack membrane. The catalysed reaction is UDP-alpha-D-glucuronate = UDP-alpha-D-galacturonate. Functionally, involved in the synthesis of the negatively charged monosaccharide that forms the backbone of pectic cell wall components. The chain is UDP-glucuronate 4-epimerase 2 (GAE2) from Arabidopsis thaliana (Mouse-ear cress).